A 246-amino-acid polypeptide reads, in one-letter code: C-X-C motif chemokine 16 (246 aa).

The signal sequence occupies residues 1 to 26 (MRRGFGPLSLAFFLFLLALLTLPGDG). The Extracellular portion of the chain corresponds to 27 to 201 (NQGSVAGSCS…PGAGASTPAW (175 aa)). Cystine bridges form between Cys-35/Cys-65 and Cys-37/Cys-79. Disordered regions lie at residues 104-150 (GKSF…SGAL) and 175-198 (PEAEANEKQQDDRQQEAPGAGAST). Positions 128–146 (PSDTSTPAHSQSTQHSTLP) are enriched in polar residues. Positions 175–189 (PEAEANEKQQDDRQQ) are enriched in basic and acidic residues. Residues 202-222 (VPVLSLLAIVFFLTAAMAYVL) traverse the membrane as a helical segment. The Cytoplasmic portion of the chain corresponds to 223 to 246 (CNRRATQQNSAGLQLWYTPVEPRP).

Belongs to the intercrine alpha (chemokine CxC) family. In terms of processing, glycosylated. Widely expressed. Not detected in purified B- and T-cells.

The protein resides in the membrane. In terms of biological role, induces a strong chemotactic response. Induces calcium mobilization. Binds to CXCR6/Bonzo. Also acts as a scavenger receptor on macrophages, which specifically binds to OxLDL (oxidized low density lipoprotein), suggesting that it may be involved in pathophysiology such as atherogenesis. This is C-X-C motif chemokine 16 (Cxcl16) from Mus musculus (Mouse).